We begin with the raw amino-acid sequence, 442 residues long: Histidinol dehydrogenase (442 aa).

NAD(+) contacts are provided by Y132, Q194, and N217. Substrate-binding residues include S243, Q265, and H268. Zn(2+) contacts are provided by Q265 and H268. Residues E332 and H333 each act as proton acceptor in the active site. Substrate is bound by residues H333, D366, E420, and H425. D366 contacts Zn(2+). Residue H425 coordinates Zn(2+).

It belongs to the histidinol dehydrogenase family. Requires Zn(2+) as cofactor.

The catalysed reaction is L-histidinol + 2 NAD(+) + H2O = L-histidine + 2 NADH + 3 H(+). Its pathway is amino-acid biosynthesis; L-histidine biosynthesis; L-histidine from 5-phospho-alpha-D-ribose 1-diphosphate: step 9/9. Its function is as follows. Catalyzes the sequential NAD-dependent oxidations of L-histidinol to L-histidinaldehyde and then to L-histidine. The polypeptide is Histidinol dehydrogenase (Idiomarina loihiensis (strain ATCC BAA-735 / DSM 15497 / L2-TR)).